The following is a 410-amino-acid chain: Serine hydroxymethyltransferase (410 aa).

(6S)-5,6,7,8-tetrahydrofolate is bound by residues leucine 119 and 123–125 (GHL). Lysine 228 carries the N6-(pyridoxal phosphate)lysine modification. (6S)-5,6,7,8-tetrahydrofolate is bound at residue 351–353 (SPF).

Belongs to the SHMT family. In terms of assembly, homodimer. It depends on pyridoxal 5'-phosphate as a cofactor.

The protein resides in the cytoplasm. It catalyses the reaction (6R)-5,10-methylene-5,6,7,8-tetrahydrofolate + glycine + H2O = (6S)-5,6,7,8-tetrahydrofolate + L-serine. The protein operates within one-carbon metabolism; tetrahydrofolate interconversion. It participates in amino-acid biosynthesis; glycine biosynthesis; glycine from L-serine: step 1/1. Catalyzes the reversible interconversion of serine and glycine with tetrahydrofolate (THF) serving as the one-carbon carrier. This reaction serves as the major source of one-carbon groups required for the biosynthesis of purines, thymidylate, methionine, and other important biomolecules. Also exhibits THF-independent aldolase activity toward beta-hydroxyamino acids, producing glycine and aldehydes, via a retro-aldol mechanism. The protein is Serine hydroxymethyltransferase of Alkaliphilus metalliredigens (strain QYMF).